A 181-amino-acid polypeptide reads, in one-letter code: ATP-dependent protease subunit HslV (181 aa).

Residue Thr-6 is part of the active site. The Na(+) site is built by Ala-162, Cys-165, and Thr-168.

It belongs to the peptidase T1B family. HslV subfamily. As to quaternary structure, a double ring-shaped homohexamer of HslV is capped on each side by a ring-shaped HslU homohexamer. The assembly of the HslU/HslV complex is dependent on binding of ATP.

It localises to the cytoplasm. The catalysed reaction is ATP-dependent cleavage of peptide bonds with broad specificity.. Its activity is regulated as follows. Allosterically activated by HslU binding. In terms of biological role, protease subunit of a proteasome-like degradation complex believed to be a general protein degrading machinery. The sequence is that of ATP-dependent protease subunit HslV from Solidesulfovibrio magneticus (strain ATCC 700980 / DSM 13731 / RS-1) (Desulfovibrio magneticus).